A 129-amino-acid chain; its full sequence is KVYGRCELAAAMKRLGLDNYRGYSLGNWVCAAKYESNFNTHATNRNTDGSTDYGILQINSRWWCNDGKTPGSRNLCHIPCSALLSSDITASVNCAKKIVSDGNGMNAWVAWRNRCKGTDVSVWTRGCRL.

The 129-residue stretch at 1–129 folds into the C-type lysozyme domain; the sequence is KVYGRCELAA…VSVWTRGCRL (129 aa). Intrachain disulfides connect C6-C127, C30-C115, C64-C80, and C76-C94. Catalysis depends on residues E35 and D52.

Belongs to the glycosyl hydrolase 22 family. As to quaternary structure, monomer.

The protein resides in the secreted. The catalysed reaction is Hydrolysis of (1-&gt;4)-beta-linkages between N-acetylmuramic acid and N-acetyl-D-glucosamine residues in a peptidoglycan and between N-acetyl-D-glucosamine residues in chitodextrins.. Lysozymes have primarily a bacteriolytic function; those in tissues and body fluids are associated with the monocyte-macrophage system and enhance the activity of immunoagents. This is Lysozyme C (LYZ) from Lophura leucomelanos (Kalij pheasant).